A 37-amino-acid chain; its full sequence is Large ribosomal subunit protein bL36 (37 aa).

This sequence belongs to the bacterial ribosomal protein bL36 family.

The protein is Large ribosomal subunit protein bL36 of Clostridium perfringens (strain ATCC 13124 / DSM 756 / JCM 1290 / NCIMB 6125 / NCTC 8237 / Type A).